A 251-amino-acid polypeptide reads, in one-letter code: Protein crossbronx (251 aa).

The region spanning 20-176 is the UBC core domain; that stretch reads QQEYKILAEY…TRENIRESLA (157 aa). The disordered stretch occupies residues 211–251; that stretch reads QSKHLESQSQQSNNGGNGGGGGAATGLSWVKEGEFKPLSVE. Residues 225-234 show a composition bias toward gly residues; that stretch reads GGNGGGGGAA.

Belongs to the ubiquitin-conjugating enzyme family. FTS subfamily.

The sequence is that of Protein crossbronx (cbx) from Drosophila willistoni (Fruit fly).